The chain runs to 346 residues: Methylthioribose-1-phosphate isomerase 1 (346 aa).

Substrate is bound by residues 48 to 50, R91, and Q196; that span reads RGA. The Proton donor role is filled by D237. 247 to 248 contacts substrate; that stretch reads NK.

The protein belongs to the eIF-2B alpha/beta/delta subunits family. MtnA subfamily.

The catalysed reaction is 5-(methylsulfanyl)-alpha-D-ribose 1-phosphate = 5-(methylsulfanyl)-D-ribulose 1-phosphate. The protein operates within amino-acid biosynthesis; L-methionine biosynthesis via salvage pathway; L-methionine from S-methyl-5-thio-alpha-D-ribose 1-phosphate: step 1/6. Functionally, catalyzes the interconversion of methylthioribose-1-phosphate (MTR-1-P) into methylthioribulose-1-phosphate (MTRu-1-P). This Pseudothermotoga lettingae (strain ATCC BAA-301 / DSM 14385 / NBRC 107922 / TMO) (Thermotoga lettingae) protein is Methylthioribose-1-phosphate isomerase 1.